Here is a 238-residue protein sequence, read N- to C-terminus: Monocyte to macrophage differentiation factor (238 aa).

Residues 1 to 28 (MQFRNRFQRFMNHRAPANGRYKPTCYEH) are Cytoplasmic-facing. A helical transmembrane segment spans residues 29-49 (AANCYTHAFLIVPAIVGSALL). The Lumenal portion of the chain corresponds to 50-61 (HRLSDDCWEKIT). A helical membrane pass occupies residues 62–82 (AWIYGMGLCALFIVSTVFHIV). At 83 to 101 (SWKKSHLRTVEHCFHMCDR) the chain is on the cytoplasmic side. Residues 102 to 122 (MVIYFFIAASYAPWLNLRELG) traverse the membrane as a helical segment. Residue Pro123 is a topological domain, lumenal. The chain crosses the membrane as a helical span at residues 124–144 (LASHMRWFIWLMAAGGTIYVF). The Cytoplasmic portion of the chain corresponds to 145-151 (LYHEKYK). The chain crosses the membrane as a helical span at residues 152 to 172 (VVELFFYLTMGFSPALVVTSM). Residues 173–174 (NN) are Lumenal-facing. A helical transmembrane segment spans residues 175–195 (TDGLQELACGGLIYCLGVVFF). Topologically, residues 196–198 (KSD) are cytoplasmic. A helical membrane pass occupies residues 199–219 (GIIPFAHAIWHLFVATAAAVH). Over 220 to 238 (YYAIWKYLYRSPTDFIRHL) the chain is Lumenal.

This sequence belongs to the ADIPOR family. In terms of tissue distribution, preferentially expressed in the brain.

The protein resides in the late endosome membrane. It localises to the lysosome membrane. In terms of biological role, is involved in the dynamics of lysosomal membranes associated with microglial activation following brain lesion. The sequence is that of Monocyte to macrophage differentiation factor from Rattus norvegicus (Rat).